The following is a 424-amino-acid chain: Serine--tRNA ligase (424 aa).

230-232 (TSE) provides a ligand contact to L-serine. Residues 261-263 (RKE) and Val-277 contribute to the ATP site. Glu-284 contacts L-serine. 348 to 351 (ELTS) is an ATP binding site. Thr-382 lines the L-serine pocket.

This sequence belongs to the class-II aminoacyl-tRNA synthetase family. Type-1 seryl-tRNA synthetase subfamily. As to quaternary structure, homodimer. The tRNA molecule binds across the dimer.

The protein resides in the cytoplasm. It catalyses the reaction tRNA(Ser) + L-serine + ATP = L-seryl-tRNA(Ser) + AMP + diphosphate + H(+). The enzyme catalyses tRNA(Sec) + L-serine + ATP = L-seryl-tRNA(Sec) + AMP + diphosphate + H(+). It participates in aminoacyl-tRNA biosynthesis; selenocysteinyl-tRNA(Sec) biosynthesis; L-seryl-tRNA(Sec) from L-serine and tRNA(Sec): step 1/1. Catalyzes the attachment of serine to tRNA(Ser). Is also able to aminoacylate tRNA(Sec) with serine, to form the misacylated tRNA L-seryl-tRNA(Sec), which will be further converted into selenocysteinyl-tRNA(Sec). This Nocardioides sp. (strain ATCC BAA-499 / JS614) protein is Serine--tRNA ligase.